A 460-amino-acid chain; its full sequence is A-type ATP synthase subunit B (460 aa).

This sequence belongs to the ATPase alpha/beta chains family. In terms of assembly, has multiple subunits with at least A(3), B(3), C, D, E, F, H, I and proteolipid K(x).

The protein localises to the cell membrane. Its function is as follows. Component of the A-type ATP synthase that produces ATP from ADP in the presence of a proton gradient across the membrane. The B chain is a regulatory subunit. In Thermofilum pendens (strain DSM 2475 / Hrk 5), this protein is A-type ATP synthase subunit B.